The primary structure comprises 347 residues: Holliday junction branch migration complex subunit RuvB (347 aa).

The tract at residues 1 to 183 (MSDERVVTPR…FGSVHRLEFY (183 aa)) is large ATPase domain (RuvB-L). ATP is bound by residues L22, R23, G64, K67, T68, S69, 130-132 (EDF), R173, Y183, and R220. T68 lines the Mg(2+) pocket. The small ATPAse domain (RuvB-S) stretch occupies residues 184-254 (SVDALYEIVM…VARDALAKLE (71 aa)). The head domain (RuvB-H) stretch occupies residues 257–347 (HLGLDENDRR…NGAEQGRLWT (91 aa)). Residues R312 and R317 each coordinate DNA.

Belongs to the RuvB family. Homohexamer. Forms an RuvA(8)-RuvB(12)-Holliday junction (HJ) complex. HJ DNA is sandwiched between 2 RuvA tetramers; dsDNA enters through RuvA and exits via RuvB. An RuvB hexamer assembles on each DNA strand where it exits the tetramer. Each RuvB hexamer is contacted by two RuvA subunits (via domain III) on 2 adjacent RuvB subunits; this complex drives branch migration. In the full resolvosome a probable DNA-RuvA(4)-RuvB(12)-RuvC(2) complex forms which resolves the HJ.

Its subcellular location is the cytoplasm. The catalysed reaction is ATP + H2O = ADP + phosphate + H(+). In terms of biological role, the RuvA-RuvB-RuvC complex processes Holliday junction (HJ) DNA during genetic recombination and DNA repair, while the RuvA-RuvB complex plays an important role in the rescue of blocked DNA replication forks via replication fork reversal (RFR). RuvA specifically binds to HJ cruciform DNA, conferring on it an open structure. The RuvB hexamer acts as an ATP-dependent pump, pulling dsDNA into and through the RuvAB complex. RuvB forms 2 homohexamers on either side of HJ DNA bound by 1 or 2 RuvA tetramers; 4 subunits per hexamer contact DNA at a time. Coordinated motions by a converter formed by DNA-disengaged RuvB subunits stimulates ATP hydrolysis and nucleotide exchange. Immobilization of the converter enables RuvB to convert the ATP-contained energy into a lever motion, pulling 2 nucleotides of DNA out of the RuvA tetramer per ATP hydrolyzed, thus driving DNA branch migration. The RuvB motors rotate together with the DNA substrate, which together with the progressing nucleotide cycle form the mechanistic basis for DNA recombination by continuous HJ branch migration. Branch migration allows RuvC to scan DNA until it finds its consensus sequence, where it cleaves and resolves cruciform DNA. This Roseiflexus castenholzii (strain DSM 13941 / HLO8) protein is Holliday junction branch migration complex subunit RuvB.